The chain runs to 1412 residues: DNA-directed RNA polymerase subunit beta' (1412 aa).

Zn(2+) contacts are provided by Cys-70, Cys-72, Cys-85, and Cys-88. Mg(2+) contacts are provided by Asp-460, Asp-462, and Asp-464. 4 residues coordinate Zn(2+): Cys-819, Cys-893, Cys-900, and Cys-903. Residues Ala-1391–Glu-1412 are disordered.

It belongs to the RNA polymerase beta' chain family. The RNAP catalytic core consists of 2 alpha, 1 beta, 1 beta' and 1 omega subunit. When a sigma factor is associated with the core the holoenzyme is formed, which can initiate transcription. Mg(2+) is required as a cofactor. The cofactor is Zn(2+).

It carries out the reaction RNA(n) + a ribonucleoside 5'-triphosphate = RNA(n+1) + diphosphate. Its function is as follows. DNA-dependent RNA polymerase catalyzes the transcription of DNA into RNA using the four ribonucleoside triphosphates as substrates. The polypeptide is DNA-directed RNA polymerase subunit beta' (Paraburkholderia xenovorans (strain LB400)).